The following is a 467-amino-acid chain: Xanthan biosynthesis protein XanB (467 aa).

This sequence belongs to the mannose-6-phosphate isomerase type 2 family.

It carries out the reaction D-mannose 6-phosphate = D-fructose 6-phosphate. The enzyme catalyses alpha-D-mannose 1-phosphate + GTP + H(+) = GDP-alpha-D-mannose + diphosphate. The protein operates within nucleotide-sugar biosynthesis; GDP-alpha-D-mannose biosynthesis; GDP-alpha-D-mannose from alpha-D-mannose 1-phosphate (GTP route): step 1/1. It functions in the pathway nucleotide-sugar biosynthesis; GDP-alpha-D-mannose biosynthesis; alpha-D-mannose 1-phosphate from D-fructose 6-phosphate: step 1/2. In terms of biological role, involved in xanthan production. The polypeptide is Xanthan biosynthesis protein XanB (xanB) (Xanthomonas campestris pv. campestris (strain ATCC 33913 / DSM 3586 / NCPPB 528 / LMG 568 / P 25)).